Consider the following 491-residue polypeptide: Cysteine--tRNA ligase (491 aa).

Residue C31 participates in Zn(2+) binding. The short motif at 33 to 43 is the 'HIGH' region element; that stretch reads PTVYGDAHLGH. Zn(2+) is bound by residues C226, H251, and E255. Positions 283-287 match the 'KMSKS' region motif; sequence KMGKS. Residue K286 coordinates ATP.

This sequence belongs to the class-I aminoacyl-tRNA synthetase family. In terms of assembly, monomer. It depends on Zn(2+) as a cofactor.

The protein resides in the cytoplasm. It catalyses the reaction tRNA(Cys) + L-cysteine + ATP = L-cysteinyl-tRNA(Cys) + AMP + diphosphate. In Parabacteroides distasonis (strain ATCC 8503 / DSM 20701 / CIP 104284 / JCM 5825 / NCTC 11152), this protein is Cysteine--tRNA ligase.